The sequence spans 307 residues: Aspartate carbamoyltransferase catalytic subunit (307 aa).

Carbamoyl phosphate is bound by residues Arg54 and Thr55. Lys83 is an L-aspartate binding site. Residues Arg104, His132, and Gln135 each coordinate carbamoyl phosphate. The L-aspartate site is built by Arg165 and Arg228. The carbamoyl phosphate site is built by Leu267 and Pro268.

It belongs to the aspartate/ornithine carbamoyltransferase superfamily. ATCase family. In terms of assembly, heterododecamer (2C3:3R2) of six catalytic PyrB chains organized as two trimers (C3), and six regulatory PyrI chains organized as three dimers (R2).

The catalysed reaction is carbamoyl phosphate + L-aspartate = N-carbamoyl-L-aspartate + phosphate + H(+). It functions in the pathway pyrimidine metabolism; UMP biosynthesis via de novo pathway; (S)-dihydroorotate from bicarbonate: step 2/3. In terms of biological role, catalyzes the condensation of carbamoyl phosphate and aspartate to form carbamoyl aspartate and inorganic phosphate, the committed step in the de novo pyrimidine nucleotide biosynthesis pathway. The protein is Aspartate carbamoyltransferase catalytic subunit of Clostridium perfringens (strain ATCC 13124 / DSM 756 / JCM 1290 / NCIMB 6125 / NCTC 8237 / Type A).